A 700-amino-acid polypeptide reads, in one-letter code: Acyl-coenzyme A oxidase 2 (700 aa).

Belongs to the acyl-CoA oxidase family. As to quaternary structure, heteropentamer composed of five different subunits. FAD serves as cofactor.

It is found in the peroxisome. It carries out the reaction a 2,3-saturated acyl-CoA + O2 = a (2E)-enoyl-CoA + H2O2. It participates in lipid metabolism; peroxisomal fatty acid beta-oxidation. In terms of biological role, oxidizes strain chain acyl-CoAs with a chain length of 10 to 14 carbons. Also active toward the 2S isomers of acyl-CoA-esters containing a 2-methyl group. In Yarrowia lipolytica (strain CLIB 122 / E 150) (Yeast), this protein is Acyl-coenzyme A oxidase 2 (POX2).